The sequence spans 416 residues: Probable carboxypeptidase An18g06210 (416 aa).

A signal peptide spans 1 to 16 (MKSPISLLAAVGVASA). Residues asparagine 54, asparagine 70, and asparagine 129 are each glycosylated (N-linked (GlcNAc...) asparagine). A Zn(2+)-binding site is contributed by aspartate 142. Glutamate 174 (proton acceptor) is an active-site residue. Glutamate 175 contributes to the Zn(2+) binding site. Asparagine 187 and asparagine 319 each carry an N-linked (GlcNAc...) asparagine glycan.

It belongs to the peptidase M20A family. The cofactor is Zn(2+).

The protein localises to the secreted. This chain is Probable carboxypeptidase An18g06210, found in Aspergillus niger (strain ATCC MYA-4892 / CBS 513.88 / FGSC A1513).